The primary structure comprises 417 residues: Serine--tRNA ligase (417 aa).

225–227 (TLE) contributes to the L-serine binding site. 256–258 (RQE) is an ATP binding site. E279 serves as a coordination point for L-serine. 343–346 (EVSS) is an ATP binding site. T379 contacts L-serine.

It belongs to the class-II aminoacyl-tRNA synthetase family. Type-1 seryl-tRNA synthetase subfamily. As to quaternary structure, homodimer. The tRNA molecule binds across the dimer.

The protein localises to the cytoplasm. The catalysed reaction is tRNA(Ser) + L-serine + ATP = L-seryl-tRNA(Ser) + AMP + diphosphate + H(+). It carries out the reaction tRNA(Sec) + L-serine + ATP = L-seryl-tRNA(Sec) + AMP + diphosphate + H(+). Its pathway is aminoacyl-tRNA biosynthesis; selenocysteinyl-tRNA(Sec) biosynthesis; L-seryl-tRNA(Sec) from L-serine and tRNA(Sec): step 1/1. Its function is as follows. Catalyzes the attachment of serine to tRNA(Ser). Is also able to aminoacylate tRNA(Sec) with serine, to form the misacylated tRNA L-seryl-tRNA(Sec), which will be further converted into selenocysteinyl-tRNA(Sec). This chain is Serine--tRNA ligase, found in Mycoplasma genitalium (strain ATCC 33530 / DSM 19775 / NCTC 10195 / G37) (Mycoplasmoides genitalium).